The following is a 192-amino-acid chain: Ion-translocating oxidoreductase complex subunit A (192 aa).

6 helical membrane passes run 5-25 (LLLL…FLGL), 39-59 (IGMS…SYLV), 65-85 (LPFD…AVVV), 102-122 (ALGI…VALL), 134-154 (AIFG…FSAM), and 171-191 (AIAM…TGLV).

This sequence belongs to the NqrDE/RnfAE family. As to quaternary structure, the complex is composed of six subunits: RnfA, RnfB, RnfC, RnfD, RnfE and RnfG.

Its subcellular location is the cell inner membrane. Part of a membrane-bound complex that couples electron transfer with translocation of ions across the membrane. This is Ion-translocating oxidoreductase complex subunit A from Shewanella piezotolerans (strain WP3 / JCM 13877).